Consider the following 621-residue polypeptide: GPI-anchor transamidase component GPAA1 (621 aa).

Topologically, residues 2–19 (GLLSDPVRRRALARLVLR) are cytoplasmic. The helical transmembrane segment at 20–41 (LNAPLCVLSYVAGIAWFLALVF) threads the bilayer. Residues 42–370 (PPLTQRTYMS…LLPGLSRFVS (329 aa)) are Lumenal-facing. A 2-acyl-6-[6-phosphoethanolamine-alpha-D-mannosyl-(1-&gt;2)-6-phosphoethanolamine-alpha-D-mannosyl-(1-&gt;6)-2-phosphoethanolamine-alpha-D-mannosyl-(1-&gt;4)-alpha-D-glucosaminyl]-1-(1-radyl,2-acyl-sn-glycero-3-phospho)-1D-myo-inositol is bound by residues tyrosine 49 and serine 51. A glycan (N-linked (GlcNAc...) asparagine) is linked at asparagine 203. A disulfide bridge connects residues cysteine 259 and cysteine 266. Histidine 354, glutamine 355, and serine 356 together coordinate a 2-acyl-6-[6-phosphoethanolamine-alpha-D-mannosyl-(1-&gt;2)-6-phosphoethanolamine-alpha-D-mannosyl-(1-&gt;6)-2-phosphoethanolamine-alpha-D-mannosyl-(1-&gt;4)-alpha-D-glucosaminyl]-1-(1-radyl,2-acyl-sn-glycero-3-phospho)-1D-myo-inositol. Glutamine 355 serves as a coordination point for Mg(2+). Residues 371-393 (IGLYMPAVGFLLLVLGLKALELW) traverse the membrane as a helical segment. The Cytoplasmic segment spans residues 394–425 (MQLHEAGMGLEEPGGAPGPSVPLPPSQGVGLA). A helical membrane pass occupies residues 426–450 (SLVAPLLISQAMGLALYVLPVLGQH). Over 451 to 462 (VATQHFPVAEAE) the chain is Lumenal. Residues 463-483 (AVVLTLLAIYAAGLALPHNTH) traverse the membrane as a helical segment. Residues 484-495 (RVVSTQAPDRGW) are Cytoplasmic-facing. 2 consecutive transmembrane segments (helical) span residues 496–519 (MALKLVALIYLALQLGCIALTNFS) and 520–536 (LGFLLATTMVPTAALAK). Topologically, residues 537–540 (PHGP) are cytoplasmic. Residues 541 to 563 (RTLYAALLVLTSPAATLLGSLFL) traverse the membrane as a helical segment. Residues 564 to 597 (WRELQEAPLSLAEGWQLFLAALAQGVLEHHTYGA) are Lumenal-facing. Residues 598–619 (LLFPLLSLGLYPCWLLFWNVLF) form a helical membrane-spanning segment. Topologically, residues 620–621 (WK) are cytoplasmic.

As to quaternary structure, heteropentamer. Part of the GPI-anchor transamidase complex, consisting of PIGK, PIGT, PIGS, PIGU and GAA1. Interacts with PIGK. In terms of tissue distribution, ubiquitously expressed in fetal and adult tissues. Expressed at higher levels in fetal tissues than adult tissues.

The protein localises to the endoplasmic reticulum membrane. Its pathway is glycolipid biosynthesis; glycosylphosphatidylinositol-anchor biosynthesis. Component of the glycosylphosphatidylinositol-anchor (GPI-anchor) transamidase (GPI-T) complex that catalyzes the formation of the linkage between a proprotein and a GPI-anchor and participates in GPI anchored protein biosynthesis. Binds GPI-anchor. In Homo sapiens (Human), this protein is GPI-anchor transamidase component GPAA1.